Here is a 286-residue protein sequence, read N- to C-terminus: Probable alpha-ketoglutarate-dependent hypophosphite dioxygenase (286 aa).

It belongs to the PhyH family.

In terms of biological role, required for hypophosphite oxidation. The sequence is that of Probable alpha-ketoglutarate-dependent hypophosphite dioxygenase (htxA) from Stutzerimonas stutzeri (Pseudomonas stutzeri).